A 256-amino-acid polypeptide reads, in one-letter code: Probable sulfite/organosulfonate exporter TauE (256 aa).

The next 8 membrane-spanning stretches (helical) occupy residues 5–25 (LLLPLLGLQALLGAGTYFQTV), 33–53 (IVMGVTSGLGLAPVATVAAVV), 76–96 (AVAAAAIGILPSVVVGVLVLE), 103–123 (ATLLQLLLGAVILYGGLSAAL), 142–162 (VFGGLLSGMFGVSGPPLIFQF), 172–190 (IRCALILVFTVTSTVRTLF), 199–219 (AAVCVQAAIAVPVVVIATLLG), and 236–256 (FGVLIGIGASLMLPAISAWVL).

Belongs to the 4-toluene sulfonate uptake permease (TSUP) (TC 2.A.102) family.

The protein localises to the cell inner membrane. Functionally, could be a sulfite/organosulfonate exporter with a wide substrate range, including 3-sulfolactate and 3-sulfopyruvate. This chain is Probable sulfite/organosulfonate exporter TauE, found in Cupriavidus necator (strain ATCC 17699 / DSM 428 / KCTC 22496 / NCIMB 10442 / H16 / Stanier 337) (Ralstonia eutropha).